The chain runs to 637 residues: Chaperone protein DnaK (637 aa).

Threonine 198 bears the Phosphothreonine; by autocatalysis mark. The tract at residues 600–637 (IAQQQAQAQQAQGADAGAQSKDDDVVDAEFEEVKDDKK) is disordered. Residues 601 to 618 (AQQQAQAQQAQGADAGAQ) are compositionally biased toward low complexity. Residues 623 to 637 (DVVDAEFEEVKDDKK) are compositionally biased toward acidic residues.

This sequence belongs to the heat shock protein 70 family.

Functionally, acts as a chaperone. The polypeptide is Chaperone protein DnaK (Vibrio parahaemolyticus serotype O3:K6 (strain RIMD 2210633)).